Reading from the N-terminus, the 555-residue chain is Formate--tetrahydrofolate ligase (555 aa).

64-71 (TKAGIGKT) is a binding site for ATP.

The protein belongs to the formate--tetrahydrofolate ligase family.

It catalyses the reaction (6S)-5,6,7,8-tetrahydrofolate + formate + ATP = (6R)-10-formyltetrahydrofolate + ADP + phosphate. The protein operates within one-carbon metabolism; tetrahydrofolate interconversion. This is Formate--tetrahydrofolate ligase from Phocaeicola vulgatus (strain ATCC 8482 / DSM 1447 / JCM 5826 / CCUG 4940 / NBRC 14291 / NCTC 11154) (Bacteroides vulgatus).